The chain runs to 336 residues: GTPase Obg (336 aa).

The region spanning 1–159 (MKFLDQAKIY…RWVWLRLKLI (159 aa)) is the Obg domain. The 169-residue stretch at 160–328 (ADIGLVGLPN…LLRLLQDRVT (169 aa)) folds into the OBG-type G domain. Residues 166–173 (GLPNAGKS), 191–195 (FTTLH), 213–216 (DIPG), 280–283 (NKCD), and 309–311 (SGA) contribute to the GTP site. Residues Ser173 and Thr193 each coordinate Mg(2+).

This sequence belongs to the TRAFAC class OBG-HflX-like GTPase superfamily. OBG GTPase family. Monomer. Mg(2+) serves as cofactor.

Its subcellular location is the cytoplasm. An essential GTPase which binds GTP, GDP and possibly (p)ppGpp with moderate affinity, with high nucleotide exchange rates and a fairly low GTP hydrolysis rate. Plays a role in control of the cell cycle, stress response, ribosome biogenesis and in those bacteria that undergo differentiation, in morphogenesis control. The chain is GTPase Obg from Gluconobacter oxydans (strain 621H) (Gluconobacter suboxydans).